An 837-amino-acid polypeptide reads, in one-letter code: Zinc fingers and homeoboxes protein 2 (837 aa).

The interval 27 to 77 (VDRAKEKGIGTPQPDVAKDSWAAELENSSKENEVIEVKSMGESQSKKLQGG) is interaction with EFNB1. The residue at position 37 (T37) is a Phosphothreonine. K64 participates in a covalent cross-link: Glycyl lysine isopeptide (Lys-Gly) (interchain with G-Cter in SUMO2). C2H2-type zinc fingers lie at residues 78–101 (YECK…DMQH) and 110–133 (YVCA…SKFH). A compositionally biased stretch (low complexity) spans 164–180 (SITTSGPGTGDSDSGIS). The tract at residues 164-204 (SITTSGPGTGDSDSGISVSKTPIMKPGKPKADAKKVPKKPE) is disordered. A compositionally biased stretch (basic and acidic residues) spans 192 to 204 (PKADAKKVPKKPE). Positions 195–358 (DAKKVPKKPE…PAQLAPTKVT (164 aa)) are required for homodimerization. T207 bears the Phosphothreonine mark. 4 consecutive DNA-binding regions (homeobox) follow at residues 263-324 (NTTK…WSPE), 439-501 (TPAS…IVHI), 530-591 (PQKF…EQAV), and 628-690 (SPSP…TVKW). Residues 263–446 (NTTKYNSALD…PLTPASDRKK (184 aa)) are required for repressor activity. The required for interaction with NFYA stretch occupies residues 263–497 (NTTKYNSALD…SDHRYRCQRG (235 aa)). The tract at residues 317 to 446 (HGISWSPEEV…PLTPASDRKK (130 aa)) is required for nuclear localization. A disordered region spans residues 404 to 445 (GQKRPLVTPQAAPEPKRPHIAQVPEPPPKVANPPLTPASDRK). The segment covering 427–439 (PEPPPKVANPPLT) has biased composition (pro residues). A Glycyl lysine isopeptide (Lys-Gly) (interchain with G-Cter in SUMO2) cross-link involves residue K455. The tract at residues 755–837 (PAKDCLPAKP…DCVPAEAGQA (83 aa)) is disordered. 2 positions are modified to phosphoserine: S825 and S827.

The protein belongs to the ZHX family. In terms of assembly, homodimer (via homeobox domain). Heterodimer with ZHX1 (via homeobox domain 1). Heterodimer with ZHX3 (via homeobox domain 1). Heterodimerization with ZHX1 is not necessary for repressor activity. Interacts (via homeobox domain) with NFYA (via N-terminus). Interacts with EFNB1 intracellular domain peptide; the interaction enhances ZHX2 transcriptional repression activity. Ubiquitously expressed. Expressed in podocytes.

Its subcellular location is the nucleus. Its function is as follows. Acts as a transcriptional repressor. Represses the promoter activity of the CDC25C gene stimulated by NFYA. May play a role in retinal development where it regulates the composition of bipolar cell populations, by promoting differentiation of bipolar OFF-type cells. In the brain, may promote maintenance and suppress differentiation of neural progenitor cells in the developing cortex. This is Zinc fingers and homeoboxes protein 2 (ZHX2) from Homo sapiens (Human).